A 341-amino-acid chain; its full sequence is Anthranilate phosphoribosyltransferase (341 aa).

5-phospho-alpha-D-ribose 1-diphosphate is bound by residues glycine 79, 82 to 83, threonine 87, 89 to 92, 107 to 115, and alanine 119; these read GD, NIST, and KHGNRAASS. Glycine 79 is a binding site for anthranilate. Serine 91 lines the Mg(2+) pocket. Asparagine 110 is a binding site for anthranilate. Arginine 165 lines the anthranilate pocket. Mg(2+) is bound by residues aspartate 224 and glutamate 225.

Belongs to the anthranilate phosphoribosyltransferase family. Homodimer. Mg(2+) serves as cofactor.

The enzyme catalyses N-(5-phospho-beta-D-ribosyl)anthranilate + diphosphate = 5-phospho-alpha-D-ribose 1-diphosphate + anthranilate. The protein operates within amino-acid biosynthesis; L-tryptophan biosynthesis; L-tryptophan from chorismate: step 2/5. Its function is as follows. Catalyzes the transfer of the phosphoribosyl group of 5-phosphorylribose-1-pyrophosphate (PRPP) to anthranilate to yield N-(5'-phosphoribosyl)-anthranilate (PRA). This chain is Anthranilate phosphoribosyltransferase, found in Lacticaseibacillus casei (strain BL23) (Lactobacillus casei).